Here is a 290-residue protein sequence, read N- to C-terminus: Shikimate dehydrogenase (NADP(+)) (290 aa).

Shikimate is bound by residues 21–23 and threonine 68; that span reads SLS. Residue lysine 72 is the Proton acceptor of the active site. Glutamate 84 is an NADP(+) binding site. Shikimate is bound by residues asparagine 93 and aspartate 108. Residues 132-136 and leucine 230 each bind NADP(+); that span reads GYGGA. Tyrosine 232 contributes to the shikimate binding site. Glycine 253 lines the NADP(+) pocket.

This sequence belongs to the shikimate dehydrogenase family. Homodimer.

The enzyme catalyses shikimate + NADP(+) = 3-dehydroshikimate + NADPH + H(+). Its pathway is metabolic intermediate biosynthesis; chorismate biosynthesis; chorismate from D-erythrose 4-phosphate and phosphoenolpyruvate: step 4/7. Functionally, involved in the biosynthesis of the chorismate, which leads to the biosynthesis of aromatic amino acids. Catalyzes the reversible NADPH linked reduction of 3-dehydroshikimate (DHSA) to yield shikimate (SA). The sequence is that of Shikimate dehydrogenase (NADP(+)) from Synechocystis sp. (strain ATCC 27184 / PCC 6803 / Kazusa).